The sequence spans 428 residues: Serine--tRNA ligase (428 aa).

235–237 (TAE) contacts L-serine. Position 266-268 (266-268 (RSE)) interacts with ATP. Position 289 (glutamate 289) interacts with L-serine. 353–356 (EISS) serves as a coordination point for ATP. Serine 389 contributes to the L-serine binding site.

This sequence belongs to the class-II aminoacyl-tRNA synthetase family. Type-1 seryl-tRNA synthetase subfamily. Homodimer. The tRNA molecule binds across the dimer.

The protein localises to the cytoplasm. It catalyses the reaction tRNA(Ser) + L-serine + ATP = L-seryl-tRNA(Ser) + AMP + diphosphate + H(+). The catalysed reaction is tRNA(Sec) + L-serine + ATP = L-seryl-tRNA(Sec) + AMP + diphosphate + H(+). The protein operates within aminoacyl-tRNA biosynthesis; selenocysteinyl-tRNA(Sec) biosynthesis; L-seryl-tRNA(Sec) from L-serine and tRNA(Sec): step 1/1. Its function is as follows. Catalyzes the attachment of serine to tRNA(Ser). Is also able to aminoacylate tRNA(Sec) with serine, to form the misacylated tRNA L-seryl-tRNA(Sec), which will be further converted into selenocysteinyl-tRNA(Sec). This is Serine--tRNA ligase from Shewanella baltica (strain OS185).